We begin with the raw amino-acid sequence, 417 residues long: NADH-quinone oxidoreductase subunit D (417 aa).

It belongs to the complex I 49 kDa subunit family. NDH-1 is composed of 14 different subunits. Subunits NuoB, C, D, E, F, and G constitute the peripheral sector of the complex.

Its subcellular location is the cell inner membrane. The catalysed reaction is a quinone + NADH + 5 H(+)(in) = a quinol + NAD(+) + 4 H(+)(out). Functionally, NDH-1 shuttles electrons from NADH, via FMN and iron-sulfur (Fe-S) centers, to quinones in the respiratory chain. The immediate electron acceptor for the enzyme in this species is believed to be ubiquinone. Couples the redox reaction to proton translocation (for every two electrons transferred, four hydrogen ions are translocated across the cytoplasmic membrane), and thus conserves the redox energy in a proton gradient. In Burkholderia ambifaria (strain MC40-6), this protein is NADH-quinone oxidoreductase subunit D.